We begin with the raw amino-acid sequence, 269 residues long: Diaminopimelate epimerase (269 aa).

Substrate is bound by residues Asn15, Gln49, and Asn66. The active-site Proton donor is Cys75. Residues Gly76–Asn77, Asn155, Asn187, and Glu204–Arg205 contribute to the substrate site. Catalysis depends on Cys213, which acts as the Proton acceptor. Residue Gly214–Ser215 coordinates substrate.

The protein belongs to the diaminopimelate epimerase family. In terms of assembly, homodimer.

It is found in the cytoplasm. It catalyses the reaction (2S,6S)-2,6-diaminopimelate = meso-2,6-diaminopimelate. The protein operates within amino-acid biosynthesis; L-lysine biosynthesis via DAP pathway; DL-2,6-diaminopimelate from LL-2,6-diaminopimelate: step 1/1. Catalyzes the stereoinversion of LL-2,6-diaminopimelate (L,L-DAP) to meso-diaminopimelate (meso-DAP), a precursor of L-lysine and an essential component of the bacterial peptidoglycan. The chain is Diaminopimelate epimerase from Rickettsia bellii (strain OSU 85-389).